Here is a 718-residue protein sequence, read N- to C-terminus: Potassium channel KAT1 (718 aa).

Over 1–60 (MTQAHSKSCFHQFWDGLQIKRSSDSFTVELLPSLGATINHSNKLQKFIISPYDPRYRSWE) the chain is Cytoplasmic. A helical membrane pass occupies residues 61-81 (LFLIVLVVYSAWICPFELAFL). Residues 82 to 88 (RDLPSKL) are Extracellular-facing. A helical membrane pass occupies residues 89–109 (LLVENIVDIFFAIDIVLTFFV). The Cytoplasmic segment spans residues 110–132 (AYVDSKTHLLVDDRKRIAMRYLS). The chain crosses the membrane as a helical span at residues 133-153 (TWFIFDVCSTAPFQPIILLFT). Residues 154–162 (HKGNDIAFK) are Extracellular-facing. A helical; Voltage-sensor transmembrane segment spans residues 163 to 183 (VLNLLRLWRLHRVSSLFARLE). Residues 184 to 197 (KDIRFNYFWTRCSK) are Cytoplasmic-facing. The chain crosses the membrane as a helical span at residues 198 to 218 (LISVTLFAVHCAGCFNYMIAD). Residues 219–245 (RYPNPEKTWIGAVMSTFRSESLWTRYI) lie on the Extracellular side of the membrane. Positions 246 to 265 (TALYWSITTLTTTGYGDLHA) form an intramembrane region, pore-forming. Over 266–269 (ENPT) the chain is Extracellular. The chain crosses the membrane as a helical span at residues 270 to 290 (EMLFDIVYMMFNLGLTAYLIG). Topologically, residues 291–718 (NMTNLVVHGT…DGDHLFLLEM (428 aa)) are cytoplasmic. 374–493 (LFNGVSGNFI…NILMNNLVQK (120 aa)) is a binding site for a nucleoside 3',5'-cyclic phosphate. Positions 560–584 (EATRSSASENENSSMTDKEENHDEV) are disordered. Residues 562 to 574 (TRSSASENENSSM) are compositionally biased toward polar residues. Over residues 575 to 584 (TDKEENHDEV) the composition is skewed to basic and acidic residues. One can recognise a KHA domain in the interval 647–718 (RVTIHKYRHN…DGDHLFLLEM (72 aa)).

It belongs to the potassium channel family. Plant (TC 1.A.1.4) subfamily.

It localises to the membrane. Probable inward-rectifying potassium channel. Assuming opened or closed conformations in response to the voltage difference across the membrane, the channel is activated by hyperpolarization. The protein is Potassium channel KAT1 of Oryza sativa subsp. japonica (Rice).